A 211-amino-acid polypeptide reads, in one-letter code: DELTA-stichotoxin-Hmg2a (211 aa).

An N-terminal signal peptide occupies residues 1-19 (MNRLIVLFLIVTMICATIA). Residues 20–34 (VPSREELEDQKEYKR) constitute a propeptide that is removed on maturation. Residues 37 to 46 (ALAGTIIEGA) form a plays an important role in the hemolytic activity region. The segment at 45–64 (GASLGFQILDKVLGELGKVS) is N-terminal region. The phosphocholine site is built by S88, V121, S139, P141, Y167, Y171, and Y172. Positions 139–154 (SVPFDYNFYSNWWDVK) are trp-rich region, which is important for the binding to lipid membrane. Residues 177–179 (RGD) carry the Cell attachment site, crucial for protein stability motif.

This sequence belongs to the actinoporin family. Sea anemone subfamily. As to quaternary structure, octamer or nonamer in membranes. Monomer in the soluble state.

Its subcellular location is the secreted. The protein resides in the nematocyst. It is found in the target cell membrane. In terms of biological role, pore-forming protein that forms cations-selective hydrophilic pores of around 1 nm and causes cardiac stimulation and cytolysis. Pore formation is a multi-step process that involves specific recognition of membrane sphingomyelin (but neither cholesterol nor phosphatidylcholine) using aromatic rich region and adjacent phosphocholine (POC) binding site, firm binding to the membrane (mainly driven by hydrophobic interactions) accompanied by the transfer of the N-terminal region to the lipid-water interface and finally pore formation after oligomerization of monomers. The sequence is that of DELTA-stichotoxin-Hmg2a from Heteractis magnifica (Magnificent sea anemone).